The sequence spans 163 residues: Nucleotide-binding protein BPUM_1028 (163 aa).

Belongs to the YajQ family.

Functionally, nucleotide-binding protein. The polypeptide is Nucleotide-binding protein BPUM_1028 (Bacillus pumilus (strain SAFR-032)).